Reading from the N-terminus, the 4486-residue chain is Dynein axonemal heavy chain 9 (4486 aa).

Residues 1 to 1831 are stem; it reads MRLAEERAAL…FANICDAQFL (1831 aa). 5 coiled-coil regions span residues 381–410, 504–529, 639–662, 752–823, and 1326–1355; these read DLLRSEVEESQRKLQVVSDTLSFFKQEFQD, QSTDFENDVSEFNQKVEDLDRRLGTI, AEGKRMQQKYEDMLSLLEKYETRL, TLLE…TWVT, and NINVEAMELECKQFARHIRNLDKEVRAWDA. AAA regions lie at residues 1832–2053, 2113–2334, 2440–2688, and 2787–3036; these read YSYE…VLVV, ALVR…TRFK, EFDP…IFQG, and NHNE…EQRY. Residues 1870 to 1877, 2151 to 2158, 2478 to 2485, and 2825 to 2832 each bind ATP; these read GPAGTGKT, GGAGTGKS, GTAGTGKS, and GVGGSGKQ. 3 coiled-coil regions span residues 3051–3154, 3285–3341, and 3640–3675; these read YQSL…AKAE, KRQA…AEVT, and LVENLEITKQTAAEVEKKVQEAKVTEVKINEAREHY. Positions 3051–3341 are stalk; the sequence is YQSLLHRHRK…LKCQQEAEVT (291 aa). 2 AAA regions span residues 3429 to 3656 and 3866 to 4092; these read LMDD…EVEK and LRDF…VLYN.

Belongs to the dynein heavy chain family. Consists of at least two heavy chains and a number of intermediate and light chains. Interacts with ODAD1. In terms of tissue distribution, expressed in upper and lower respiratory airway epithelia (at protein level). Not detected in spermatozoa (at protein level).

It localises to the cytoplasm. The protein resides in the cytoskeleton. It is found in the cilium axoneme. Its function is as follows. Force generating protein required for cilia beating in respiratory epithelia. Produces force towards the minus ends of microtubules. Dynein has ATPase activity; the force-producing power stroke is thought to occur on release of ADP. The protein is Dynein axonemal heavy chain 9 of Homo sapiens (Human).